Here is a 513-residue protein sequence, read N- to C-terminus: Putative ADP-ribosyl glycohydrolase L444 (513 aa).

A compositionally biased stretch (basic and acidic residues) spans 1 to 23 (MSDKIQSRESKTTKPTKTEKISD). The interval 1-33 (MSDKIQSRESKTTKPTKTEKISDKSGNLSQVKS) is disordered. The segment covering 24–33 (KSGNLSQVKS) has biased composition (polar residues).

It belongs to the ADP-ribosylglycohydrolase family.

The polypeptide is Putative ADP-ribosyl glycohydrolase L444 (Acanthamoeba polyphaga mimivirus (APMV)).